The chain runs to 584 residues: Proteasome-associated ATPase (584 aa).

The stretch at 8 to 90 (RHAERDRDEL…KEEVDRLSQP (83 aa)) forms a coiled coil. 272–277 (GCGKTL) is an ATP binding site. The segment at 583-584 (YL) is docks into pockets in the proteasome alpha-ring.

Belongs to the AAA ATPase family. As to quaternary structure, homohexamer. Assembles into a hexameric ring structure that caps the 20S proteasome core. Strongly interacts with the prokaryotic ubiquitin-like protein Pup through a hydrophobic interface; the interacting region of ARC lies in its N-terminal coiled-coil domain. There is one Pup binding site per ARC hexamer ring. Upon ATP-binding, the C-terminus of ARC interacts with the alpha-rings of the proteasome core, possibly by binding to the intersubunit pockets.

The protein operates within protein degradation; proteasomal Pup-dependent pathway. Its function is as follows. ATPase which is responsible for recognizing, binding, unfolding and translocation of pupylated proteins into the bacterial 20S proteasome core particle. May be essential for opening the gate of the 20S proteasome via an interaction with its C-terminus, thereby allowing substrate entry and access to the site of proteolysis. Thus, the C-termini of the proteasomal ATPase may function like a 'key in a lock' to induce gate opening and therefore regulate proteolysis. The chain is Proteasome-associated ATPase from Thermobifida fusca (strain YX).